Consider the following 514-residue polypeptide: Multifunctional alkaline phosphatase superfamily protein pRL90232 (514 aa).

Positions 12, 57, 324, and 325 each coordinate Mn(2+). Cysteine 57 serves as the catalytic Nucleophile. Position 57 is a 3-oxoalanine (Cys) (cysteine 57).

Belongs to the alkaline phosphatase superfamily. In terms of assembly, homotetramer. The cofactor is Mn(2+). In terms of processing, the conversion to 3-oxoalanine (also known as C-formylglycine, FGly), of a serine or cysteine residue in prokaryotes and of a cysteine residue in eukaryotes, is critical for catalytic activity.

Functionally, hydrolytic enzyme with a broad substrate specificity acting on phosphate diesters and phosphonate monoesters. The sequence is that of Multifunctional alkaline phosphatase superfamily protein pRL90232 from Rhizobium johnstonii (strain DSM 114642 / LMG 32736 / 3841) (Rhizobium leguminosarum bv. viciae).